A 316-amino-acid chain; its full sequence is N-acetyl-gamma-glutamyl-phosphate reductase (316 aa).

Residue C136 is part of the active site.

This sequence belongs to the NAGSA dehydrogenase family. Type 1 subfamily.

It is found in the cytoplasm. It catalyses the reaction N-acetyl-L-glutamate 5-semialdehyde + phosphate + NADP(+) = N-acetyl-L-glutamyl 5-phosphate + NADPH + H(+). It functions in the pathway amino-acid biosynthesis; L-arginine biosynthesis; N(2)-acetyl-L-ornithine from L-glutamate: step 3/4. Functionally, catalyzes the NADPH-dependent reduction of N-acetyl-5-glutamyl phosphate to yield N-acetyl-L-glutamate 5-semialdehyde. The chain is N-acetyl-gamma-glutamyl-phosphate reductase from Xanthomonas oryzae pv. oryzae (strain MAFF 311018).